Consider the following 338-residue polypeptide: N-acetyl-gamma-glutamyl-phosphate reductase (338 aa).

C148 is an active-site residue.

It belongs to the NAGSA dehydrogenase family. Type 1 subfamily.

The protein localises to the cytoplasm. The enzyme catalyses N-acetyl-L-glutamate 5-semialdehyde + phosphate + NADP(+) = N-acetyl-L-glutamyl 5-phosphate + NADPH + H(+). It functions in the pathway amino-acid biosynthesis; L-arginine biosynthesis; N(2)-acetyl-L-ornithine from L-glutamate: step 3/4. Catalyzes the NADPH-dependent reduction of N-acetyl-5-glutamyl phosphate to yield N-acetyl-L-glutamate 5-semialdehyde. In Leptospira interrogans serogroup Icterohaemorrhagiae serovar copenhageni (strain Fiocruz L1-130), this protein is N-acetyl-gamma-glutamyl-phosphate reductase.